Consider the following 344-residue polypeptide: S-methyl-5'-thioadenosine phosphorylase (344 aa).

Phosphate contacts are provided by residues T45, 88-89 (RH), and 121-122 (SA). M238 serves as a coordination point for substrate. S239 is a binding site for phosphate. 262 to 264 (DYD) is a substrate binding site.

The protein belongs to the PNP/MTAP phosphorylase family. MTAP subfamily. As to quaternary structure, homotrimer.

It is found in the cytoplasm. The protein resides in the nucleus. The enzyme catalyses S-methyl-5'-thioadenosine + phosphate = 5-(methylsulfanyl)-alpha-D-ribose 1-phosphate + adenine. Its pathway is amino-acid biosynthesis; L-methionine biosynthesis via salvage pathway; S-methyl-5-thio-alpha-D-ribose 1-phosphate from S-methyl-5'-thioadenosine (phosphorylase route): step 1/1. Catalyzes the reversible phosphorylation of S-methyl-5'-thioadenosine (MTA) to adenine and 5-methylthioribose-1-phosphate. Involved in the breakdown of MTA, a major by-product of polyamine biosynthesis. Responsible for the first step in the methionine salvage pathway after MTA has been generated from S-adenosylmethionine. Has broad substrate specificity with 6-aminopurine nucleosides as preferred substrates. This Candida albicans (strain SC5314 / ATCC MYA-2876) (Yeast) protein is S-methyl-5'-thioadenosine phosphorylase.